We begin with the raw amino-acid sequence, 302 residues long: 4-hydroxy-tetrahydrodipicolinate synthase (302 aa).

Threonine 57 provides a ligand contact to pyruvate. The Proton donor/acceptor role is filled by tyrosine 145. Lysine 173 functions as the Schiff-base intermediate with substrate in the catalytic mechanism. Isoleucine 213 provides a ligand contact to pyruvate.

It belongs to the DapA family. Homotetramer; dimer of dimers.

It localises to the cytoplasm. It catalyses the reaction L-aspartate 4-semialdehyde + pyruvate = (2S,4S)-4-hydroxy-2,3,4,5-tetrahydrodipicolinate + H2O + H(+). Its pathway is amino-acid biosynthesis; L-lysine biosynthesis via DAP pathway; (S)-tetrahydrodipicolinate from L-aspartate: step 3/4. In terms of biological role, catalyzes the condensation of (S)-aspartate-beta-semialdehyde [(S)-ASA] and pyruvate to 4-hydroxy-tetrahydrodipicolinate (HTPA). This Mycolicibacterium gilvum (strain PYR-GCK) (Mycobacterium gilvum (strain PYR-GCK)) protein is 4-hydroxy-tetrahydrodipicolinate synthase.